The primary structure comprises 376 residues: Glucose-1-phosphate adenylyltransferase (376 aa).

Alpha-D-glucose 1-phosphate contacts are provided by residues Tyr101, Gly166, 181–182, and Ser192; that span reads EK.

Belongs to the bacterial/plant glucose-1-phosphate adenylyltransferase family. In terms of assembly, homotetramer.

It catalyses the reaction alpha-D-glucose 1-phosphate + ATP + H(+) = ADP-alpha-D-glucose + diphosphate. It participates in glycan biosynthesis; glycogen biosynthesis. Functionally, involved in the biosynthesis of ADP-glucose, a building block required for the elongation reactions to produce glycogen. Catalyzes the reaction between ATP and alpha-D-glucose 1-phosphate (G1P) to produce pyrophosphate and ADP-Glc. The chain is Glucose-1-phosphate adenylyltransferase from Bacillus cereus (strain ATCC 10987 / NRS 248).